A 417-amino-acid chain; its full sequence is Inactive GDSL esterase/lipase-like protein 25 (417 aa).

Residues 1 to 50 form the signal peptide; it reads MLLIPSFTANSNEPPPSKLSLSDLSMAILKSHFFLLFPLLLLHFHTVSFA. N-linked (GlcNAc...) asparagine glycosylation is found at N160, N308, and N311. H331 is an active-site residue.

It belongs to the 'GDSL' lipolytic enzyme family. In terms of assembly, interacts with the PYK10 complex and TGG2, but not with TGG1 or PEN2. In terms of tissue distribution, expressed throughout the seedling, rosette leaves, roots, inflorescence and imbibed seed, but not in pollen.

It localises to the vacuole. Its subcellular location is the endoplasmic reticulum. Involved in organization of the endomembrane system and is required for endoplasmic reticulum morphology and organelle distribution. May act by inhibiting the formation of PYK10 complex by binding to GLL23 and exporting it from the ER. Required for proper subcellular localization of myrosinase TGG2. Has no lipase or esterase activity. In Arabidopsis thaliana (Mouse-ear cress), this protein is Inactive GDSL esterase/lipase-like protein 25 (MVP1).